Consider the following 368-residue polypeptide: Methionine import ATP-binding protein MetN (368 aa).

An ABC transporter domain is found at 5–260 (IELNNLSVQF…PKEALTKQFI (256 aa)). Residue 41-48 (GYSGAGKS) participates in ATP binding.

Belongs to the ABC transporter superfamily. Methionine importer (TC 3.A.1.24) family. The complex is composed of two ATP-binding proteins (MetN), two transmembrane proteins (MetI) and a solute-binding protein (MetQ).

It is found in the cell membrane. The catalysed reaction is L-methionine(out) + ATP + H2O = L-methionine(in) + ADP + phosphate + H(+). The enzyme catalyses D-methionine(out) + ATP + H2O = D-methionine(in) + ADP + phosphate + H(+). In terms of biological role, part of the ABC transporter complex MetNIQ involved in methionine import. Responsible for energy coupling to the transport system. This Lactococcus lactis subsp. cremoris (strain MG1363) protein is Methionine import ATP-binding protein MetN.